Here is a 551-residue protein sequence, read N- to C-terminus: Cytochrome c oxidase subunit 1 (551 aa).

Residues 29-49 traverse the membrane as a helical segment; sequence VIGIQYLVTSFLFFFIGGSFA. Position 76 (His76) interacts with Fe(II)-heme a. The next 11 helical transmembrane spans lie at 79 to 99, 113 to 133, 156 to 176, 205 to 225, 245 to 265, 283 to 303, 313 to 333, 348 to 368, 382 to 402, 424 to 444, and 466 to 486; these read IMIF…LIPL, AVAF…FFVG, LWIL…INFV, LILL…FDLI, LFWF…FGVI, IAYS…HHMF, MFFM…IFSW, MLFA…GVMV, FVVG…LFSG, FILT…LGLM, and IGAY…FWSL. Cu cation-binding residues include His251, Tyr255, His300, and His301. A cross-link (1'-histidyl-3'-tyrosine (His-Tyr)) is located at residues 251–255; sequence HPAVY. His386 is a binding site for heme a3. His388 contributes to the Fe(II)-heme a binding site.

This sequence belongs to the heme-copper respiratory oxidase family. The cofactor is Cu(2+). Requires heme as cofactor.

The protein localises to the cell membrane. The enzyme catalyses 4 Fe(II)-[cytochrome c] + O2 + 8 H(+)(in) = 4 Fe(III)-[cytochrome c] + 2 H2O + 4 H(+)(out). It functions in the pathway energy metabolism; oxidative phosphorylation. Its function is as follows. Cytochrome c oxidase is the component of the respiratory chain that catalyzes the reduction of oxygen to water. Subunits 1-3 form the functional core of the enzyme complex. CO I is the catalytic subunit of the enzyme. Electrons originating in cytochrome c are transferred via the copper A center of subunit 2 and heme A of subunit 1 to the bimetallic center formed by heme A3 and copper B. In Synechocystis sp. (strain ATCC 27184 / PCC 6803 / Kazusa), this protein is Cytochrome c oxidase subunit 1 (ctaD).